A 492-amino-acid chain; its full sequence is E3 ubiquitin-protein ligase XIAP (492 aa).

BIR repeat units lie at residues 40–105 (RLAS…KFIN), 172–237 (RLQT…YFVL), and 271–334 (RLET…KFLI). The Zn(2+) site is built by cysteine 303, cysteine 306, histidine 323, and cysteine 330. The segment at 445 to 480 (CKVCMDRRISIVFIPCGHLVACAVCADVLDKCPICC) adopts an RING-type zinc-finger fold.

This sequence belongs to the IAP family. In terms of assembly, monomer, and homodimer. Post-translationally, degraded in a 2-step mechanism; a caspase-independent first step and a caspase-dependent second step. Stabilized indirectly by MAPK, which acts to delay caspase activation, rather than directly phosphorylating xiap.

It is found in the cytoplasm. The catalysed reaction is S-ubiquitinyl-[E2 ubiquitin-conjugating enzyme]-L-cysteine + [acceptor protein]-L-lysine = [E2 ubiquitin-conjugating enzyme]-L-cysteine + N(6)-ubiquitinyl-[acceptor protein]-L-lysine.. Multi-functional protein which regulates not only caspases and apoptosis, but also acts as an E3 ubiquitin-protein ligase mediating ubiquitination and subsequent proteasomal degradation of its target proteins. Acts as a direct caspase inhibitor. E3 ubiquitin-protein ligase that acts as an important regulator of innate immunity by mediating 'Lys-63'-linked polyubiquitination of ripk2 downstream of NOD1 and NOD2, thereby transforming ripk2 into a scaffolding protein for downstream effectors, ultimately leading to activation of the NF-kappa-B and MAP kinases signaling. A key apoptotic suppressor in eggs. Acts as a positive regulator of Wnt signaling. The chain is E3 ubiquitin-protein ligase XIAP (xiap) from Xenopus tropicalis (Western clawed frog).